Reading from the N-terminus, the 417-residue chain is Serine hydroxymethyltransferase (417 aa).

(6S)-5,6,7,8-tetrahydrofolate-binding positions include Leu-121 and 125 to 127 (GHL). At Lys-229 the chain carries N6-(pyridoxal phosphate)lysine. 355-357 (SPF) contributes to the (6S)-5,6,7,8-tetrahydrofolate binding site.

Belongs to the SHMT family. Homodimer. Requires pyridoxal 5'-phosphate as cofactor.

Its subcellular location is the cytoplasm. It catalyses the reaction (6R)-5,10-methylene-5,6,7,8-tetrahydrofolate + glycine + H2O = (6S)-5,6,7,8-tetrahydrofolate + L-serine. The protein operates within one-carbon metabolism; tetrahydrofolate interconversion. It functions in the pathway amino-acid biosynthesis; glycine biosynthesis; glycine from L-serine: step 1/1. Functionally, catalyzes the reversible interconversion of serine and glycine with tetrahydrofolate (THF) serving as the one-carbon carrier. This reaction serves as the major source of one-carbon groups required for the biosynthesis of purines, thymidylate, methionine, and other important biomolecules. Also exhibits THF-independent aldolase activity toward beta-hydroxyamino acids, producing glycine and aldehydes, via a retro-aldol mechanism. This Shewanella baltica (strain OS195) protein is Serine hydroxymethyltransferase.